Reading from the N-terminus, the 103-residue chain is Co-chaperonin GroES (103 aa).

It belongs to the GroES chaperonin family. Heptamer of 7 subunits arranged in a ring. Interacts with the chaperonin GroEL.

The protein resides in the cytoplasm. Together with the chaperonin GroEL, plays an essential role in assisting protein folding. The GroEL-GroES system forms a nano-cage that allows encapsulation of the non-native substrate proteins and provides a physical environment optimized to promote and accelerate protein folding. GroES binds to the apical surface of the GroEL ring, thereby capping the opening of the GroEL channel. This is Co-chaperonin GroES from Nostoc punctiforme (strain ATCC 29133 / PCC 73102).